The following is a 516-amino-acid chain: uncharacterized protein (516 aa).

Positions 1-17 are cleaved as a signal peptide; sequence MSVWVALALLGMCVSCT. Disordered stretches follow at residues 29 to 197 and 296 to 426; these read KEPP…EVPR and RTVS…RDHL. A compositionally biased stretch (basic and acidic residues) spans 71–85; the sequence is RVPESSQEREQKPES. Pro residues predominate over residues 122 to 144; the sequence is VAPPAPPAPTAPRPHRPSPPPVS. The span at 145 to 155 shows a compositional bias: low complexity; the sequence is PSASKPKQRAV. Residues 351–367 are compositionally biased toward basic and acidic residues; it reads KAQHGTPRPDEKKDREP. The segment covering 394 to 406 has biased composition (low complexity); it reads SPASQPSAPSAAP. Positions 415-426 are enriched in basic and acidic residues; that stretch reads AHKEGQEKRDHL.

This is an uncharacterized protein from Treponema pallidum (strain Nichols).